The sequence spans 138 residues: Small ribosomal subunit protein uS11c (138 aa).

Positions 1 to 23 are disordered; the sequence is MAKAIPRRSSRRNGRIGSRKSAR.

This sequence belongs to the universal ribosomal protein uS11 family. In terms of assembly, part of the 30S ribosomal subunit.

Its subcellular location is the plastid. The protein resides in the chloroplast. The chain is Small ribosomal subunit protein uS11c from Ipomoea purpurea (Common morning glory).